Consider the following 372-residue polypeptide: 7-methylxanthosine synthase 1 (372 aa).

An S-adenosyl-L-homocysteine-binding site is contributed by tyrosine 18. Xanthosine is bound by residues asparagine 21 and asparagine 25. The S-adenosyl-L-homocysteine site is built by cysteine 62, asparagine 67, aspartate 101, leucine 102, serine 140, phenylalanine 141, and cysteine 157. A xanthosine-binding site is contributed by tyrosine 158. Cysteine 159 lines the S-adenosyl-L-homocysteine pocket. Xanthosine is bound by residues glutamine 161 and tryptophan 162. Residues asparagine 179, aspartate 261, phenylalanine 263, and asparagine 264 each coordinate Mg(2+). Xanthosine is bound by residues serine 316, tyrosine 321, and tyrosine 356.

The protein belongs to the methyltransferase superfamily. Type-7 methyltransferase family. Mg(2+) serves as cofactor. Expressed in stems, young leaves, floral buds, developing endosperm and immature fruits (grains). Detected in roots and old leaves, but not in mature fruits.

The catalysed reaction is xanthosine + S-adenosyl-L-methionine = 7-methylxanthosine + S-adenosyl-L-homocysteine. Its pathway is alkaloid biosynthesis. Its function is as follows. Involved in the biosynthesis of caffeine. Specific for xanthosine and could not use xanthosine 5'-monophosphate (XMP) as substrate. Catalyzes the 7-N-methylation activity of xanthosine, but does not have 1-N- or 3-N-methylation activity. The protein is 7-methylxanthosine synthase 1 of Coffea arabica (Arabian coffee).